Consider the following 737-residue polypeptide: Phosphoribosylformylglycinamidine synthase subunit PurL (737 aa).

Residue His-50 is part of the active site. ATP is bound by residues Tyr-53 and Lys-92. Residue Glu-94 coordinates Mg(2+). Substrate contacts are provided by residues 95 to 98 and Arg-117; that span reads SHNH. Residue His-96 is the Proton acceptor of the active site. Asp-118 is a Mg(2+) binding site. Gln-241 contributes to the substrate binding site. Asp-269 is a binding site for Mg(2+). 313–315 serves as a coordination point for substrate; it reads ESQ. Residues Asp-494 and Gly-531 each contribute to the ATP site. Asn-532 lines the Mg(2+) pocket. Ser-534 contacts substrate.

This sequence belongs to the FGAMS family. As to quaternary structure, monomer. Part of the FGAM synthase complex composed of 1 PurL, 1 PurQ and 2 PurS subunits.

It localises to the cytoplasm. It catalyses the reaction N(2)-formyl-N(1)-(5-phospho-beta-D-ribosyl)glycinamide + L-glutamine + ATP + H2O = 2-formamido-N(1)-(5-O-phospho-beta-D-ribosyl)acetamidine + L-glutamate + ADP + phosphate + H(+). It participates in purine metabolism; IMP biosynthesis via de novo pathway; 5-amino-1-(5-phospho-D-ribosyl)imidazole from N(2)-formyl-N(1)-(5-phospho-D-ribosyl)glycinamide: step 1/2. In terms of biological role, part of the phosphoribosylformylglycinamidine synthase complex involved in the purines biosynthetic pathway. Catalyzes the ATP-dependent conversion of formylglycinamide ribonucleotide (FGAR) and glutamine to yield formylglycinamidine ribonucleotide (FGAM) and glutamate. The FGAM synthase complex is composed of three subunits. PurQ produces an ammonia molecule by converting glutamine to glutamate. PurL transfers the ammonia molecule to FGAR to form FGAM in an ATP-dependent manner. PurS interacts with PurQ and PurL and is thought to assist in the transfer of the ammonia molecule from PurQ to PurL. The chain is Phosphoribosylformylglycinamidine synthase subunit PurL from Rhodopseudomonas palustris (strain BisA53).